We begin with the raw amino-acid sequence, 238 residues long: Pyridoxine 5'-phosphate synthase (238 aa).

Asn-7 is a binding site for 3-amino-2-oxopropyl phosphate. 9-10 (DH) is a 1-deoxy-D-xylulose 5-phosphate binding site. A 3-amino-2-oxopropyl phosphate-binding site is contributed by Arg-18. Catalysis depends on His-43, which acts as the Proton acceptor. Positions 45 and 50 each coordinate 1-deoxy-D-xylulose 5-phosphate. Glu-70 acts as the Proton acceptor in catalysis. A 1-deoxy-D-xylulose 5-phosphate-binding site is contributed by Thr-100. Residue His-191 is the Proton donor of the active site. Residues Gly-192 and 213-214 (GH) each bind 3-amino-2-oxopropyl phosphate.

The protein belongs to the PNP synthase family. In terms of assembly, homooctamer; tetramer of dimers.

The protein resides in the cytoplasm. It catalyses the reaction 3-amino-2-oxopropyl phosphate + 1-deoxy-D-xylulose 5-phosphate = pyridoxine 5'-phosphate + phosphate + 2 H2O + H(+). Its pathway is cofactor biosynthesis; pyridoxine 5'-phosphate biosynthesis; pyridoxine 5'-phosphate from D-erythrose 4-phosphate: step 5/5. Its function is as follows. Catalyzes the complicated ring closure reaction between the two acyclic compounds 1-deoxy-D-xylulose-5-phosphate (DXP) and 3-amino-2-oxopropyl phosphate (1-amino-acetone-3-phosphate or AAP) to form pyridoxine 5'-phosphate (PNP) and inorganic phosphate. The chain is Pyridoxine 5'-phosphate synthase from Thermosynechococcus vestitus (strain NIES-2133 / IAM M-273 / BP-1).